The sequence spans 107 residues: Replication initiation control protein YabA (107 aa).

The Zn(2+) site is built by histidine 81, cysteine 83, cysteine 97, and cysteine 100.

It belongs to the YabA family. As to quaternary structure, homotetramer. Interacts with both DnaA and DnaN, acting as a bridge between these two proteins. Zn(2+) is required as a cofactor.

It localises to the cytoplasm. The protein resides in the nucleoid. In terms of biological role, involved in control of chromosome replication initiation. Inhibits the cooperative binding of DnaA to the oriC region, thus negatively regulating initiation of chromosome replication. Inhibits the ability of DnaA-ATP to form a helix on DNA; does not disassemble preformed DnaA-DNA helices. Decreases the residence time of DnaA on the chromosome at its binding sites (oriC, replication forks and promoter-binding sites). Tethers DnaA to the replication machinery via the DNA polymerase beta sliding clamp subunit (dnaN). Associates with oriC and other DnaA targets on the chromosome in a DnaA-dependent manner. This Streptococcus pyogenes serotype M3 (strain ATCC BAA-595 / MGAS315) protein is Replication initiation control protein YabA.